A 193-amino-acid chain; its full sequence is Ribonuclease HII (193 aa).

Residues 3–192 (SLVAGIDEVG…VRAVIDRSSA (190 aa)) enclose the RNase H type-2 domain. 3 residues coordinate a divalent metal cation: Asp9, Glu10, and Asp101.

This sequence belongs to the RNase HII family. Mn(2+) is required as a cofactor. Mg(2+) serves as cofactor.

It is found in the cytoplasm. It catalyses the reaction Endonucleolytic cleavage to 5'-phosphomonoester.. In terms of biological role, endonuclease that specifically degrades the RNA of RNA-DNA hybrids. In Methylococcus capsulatus (strain ATCC 33009 / NCIMB 11132 / Bath), this protein is Ribonuclease HII.